The primary structure comprises 487 residues: N-succinylglutamate 5-semialdehyde dehydrogenase (487 aa).

221 to 226 (GSSDTG) provides a ligand contact to NAD(+). Active-site residues include glutamate 244 and cysteine 278.

It belongs to the aldehyde dehydrogenase family. AstD subfamily.

The enzyme catalyses N-succinyl-L-glutamate 5-semialdehyde + NAD(+) + H2O = N-succinyl-L-glutamate + NADH + 2 H(+). Its pathway is amino-acid degradation; L-arginine degradation via AST pathway; L-glutamate and succinate from L-arginine: step 4/5. In terms of biological role, catalyzes the NAD-dependent reduction of succinylglutamate semialdehyde into succinylglutamate. In Burkholderia mallei (strain ATCC 23344), this protein is N-succinylglutamate 5-semialdehyde dehydrogenase.